The following is a 155-amino-acid chain: Ribosomal RNA large subunit methyltransferase H (155 aa).

Residues L72, G103, and 122–127 contribute to the S-adenosyl-L-methionine site; that span reads LSDLTL.

Belongs to the RNA methyltransferase RlmH family. In terms of assembly, homodimer.

The protein resides in the cytoplasm. The catalysed reaction is pseudouridine(1915) in 23S rRNA + S-adenosyl-L-methionine = N(3)-methylpseudouridine(1915) in 23S rRNA + S-adenosyl-L-homocysteine + H(+). Specifically methylates the pseudouridine at position 1915 (m3Psi1915) in 23S rRNA. This chain is Ribosomal RNA large subunit methyltransferase H, found in Variovorax paradoxus (strain S110).